Consider the following 229-residue polypeptide: Peroxiredoxin 1 (229 aa).

The Thioredoxin domain occupies 33-192 (LGPKNKAPDF…AFRTLKAFQF (160 aa)). The active-site Cysteine sulfenic acid (-SOH) intermediate is the Cys78.

This sequence belongs to the peroxiredoxin family. AhpC/Prx1 subfamily. Homodimer; disulfide-linked, upon oxidation.

The catalysed reaction is a hydroperoxide + [thioredoxin]-dithiol = an alcohol + [thioredoxin]-disulfide + H2O. Functionally, thiol-specific peroxidase that catalyzes the reduction of hydrogen peroxide and organic hydroperoxides to water and alcohols, respectively. Plays a role in cell protection against oxidative stress by detoxifying peroxides and as sensor of hydrogen peroxide-mediated signaling events. The chain is Peroxiredoxin 1 (TSA1) from Brugia malayi (Filarial nematode worm).